We begin with the raw amino-acid sequence, 441 residues long: Tubulin alpha chain (441 aa).

Positions 11, 68, 137, 141, 142, 176, 203, and 224 each coordinate GTP. Glu-68 contacts Mg(2+). Glu-250 is an active-site residue.

This sequence belongs to the tubulin family. Dimer of alpha and beta chains. A typical microtubule is a hollow water-filled tube with an outer diameter of 25 nm and an inner diameter of 15 nM. Alpha-beta heterodimers associate head-to-tail to form protofilaments running lengthwise along the microtubule wall with the beta-tubulin subunit facing the microtubule plus end conferring a structural polarity. Microtubules usually have 13 protofilaments but different protofilament numbers can be found in some organisms and specialized cells. Requires Mg(2+) as cofactor.

The protein localises to the cytoplasm. Its subcellular location is the cytoskeleton. The enzyme catalyses GTP + H2O = GDP + phosphate + H(+). In terms of biological role, tubulin is the major constituent of microtubules, a cylinder consisting of laterally associated linear protofilaments composed of alpha- and beta-tubulin heterodimers. Microtubules grow by the addition of GTP-tubulin dimers to the microtubule end, where a stabilizing cap forms. Below the cap, tubulin dimers are in GDP-bound state, owing to GTPase activity of alpha-tubulin. In Encephalitozoon cuniculi (strain GB-M1) (Microsporidian parasite), this protein is Tubulin alpha chain (TUB1).